A 240-amino-acid chain; its full sequence is Protein FAM246C (240 aa).

Disordered stretches follow at residues 1-117 (MAEP…WRSA) and 161-240 (LPAA…TRAA). 2 stretches are compositionally biased toward basic and acidic residues: residues 19 to 31 (EVLR…RRDP) and 60 to 74 (AASR…KLVE). The segment covering 165-175 (SPAPSPAPRPA) has biased composition (pro residues). Over residues 176–187 (ARPCRGRSAPLA) the composition is skewed to low complexity.

It belongs to the FAM246 family.

This Homo sapiens (Human) protein is Protein FAM246C.